The primary structure comprises 171 residues: Crossover junction endodeoxyribonuclease RuvC (171 aa).

Active-site residues include Asp7, Glu66, and Asp138. Mg(2+) contacts are provided by Asp7, Glu66, and Asp138.

This sequence belongs to the RuvC family. As to quaternary structure, homodimer which binds Holliday junction (HJ) DNA. The HJ becomes 2-fold symmetrical on binding to RuvC with unstacked arms; it has a different conformation from HJ DNA in complex with RuvA. In the full resolvosome a probable DNA-RuvA(4)-RuvB(12)-RuvC(2) complex forms which resolves the HJ. Mg(2+) serves as cofactor.

It is found in the cytoplasm. The catalysed reaction is Endonucleolytic cleavage at a junction such as a reciprocal single-stranded crossover between two homologous DNA duplexes (Holliday junction).. Functionally, the RuvA-RuvB-RuvC complex processes Holliday junction (HJ) DNA during genetic recombination and DNA repair. Endonuclease that resolves HJ intermediates. Cleaves cruciform DNA by making single-stranded nicks across the HJ at symmetrical positions within the homologous arms, yielding a 5'-phosphate and a 3'-hydroxyl group; requires a central core of homology in the junction. The consensus cleavage sequence is 5'-(A/T)TT(C/G)-3'. Cleavage occurs on the 3'-side of the TT dinucleotide at the point of strand exchange. HJ branch migration catalyzed by RuvA-RuvB allows RuvC to scan DNA until it finds its consensus sequence, where it cleaves and resolves the cruciform DNA. The chain is Crossover junction endodeoxyribonuclease RuvC from Francisella tularensis subsp. mediasiatica (strain FSC147).